Consider the following 237-residue polypeptide: Carbonyl reductase family member 4 (237 aa).

NADP(+) is bound by residues 11–14, 34–35, Asp57, and 84–86; these read SRGI, RN, and AAG. A substrate-binding site is contributed by Ser135. Residues Tyr148, Lys152, and 181–183 each bind NADP(+); that span reads IHT. Tyr148 functions as the Proton acceptor in the catalytic mechanism.

Belongs to the short-chain dehydrogenases/reductases (SDR) family. As to quaternary structure, homotetramer (in vitro). Heterotetramer with HSD17B8; contains two molecules each of HSD17B8 and CBR4.

The protein resides in the mitochondrion matrix. The protein operates within lipid metabolism; fatty acid biosynthesis. In terms of biological role, the heterotetramer with HSD17B8 has NADH-dependent 3-ketoacyl-acyl carrier protein reductase activity, and thereby plays a role in mitochondrial fatty acid biosynthesis. Within the heterotetramer, HSD17B8 binds NADH; CBR4 binds NADPD. The homotetramer has NADPH-dependent quinone reductase activity. Both homotetramer and the heterotetramer have broad in vitro substrate specificity and can reduce 9,10-phenanthrenequinone, 1,4-benzoquinone and various other o-quinones and p-quinones. The polypeptide is Carbonyl reductase family member 4 (cbr4) (Danio rerio (Zebrafish)).